We begin with the raw amino-acid sequence, 988 residues long: Vacuolar sorting protein 18 (988 aa).

Residues Asn589 to Arg749 form a CHCR repeat. Residues Lys785 to Asp819 adopt a coiled-coil conformation. An RING-type; degenerate zinc finger spans residues Cys836 to Cys886.

It belongs to the VPS18 family. As to quaternary structure, core component of at least two putative endosomal tethering complexes, the homotypic fusion and vacuole protein sorting (HOPS) complex and the class C core vacuole/endosome tethering (CORVET) complex. Their common core is composed of the class C Vps proteins VPS11, VCL1, VPS18 and VPS33, which in HOPS further associates with VPS39 and VPS41 and in CORVET with VPS3.

The protein localises to the endosome membrane. Its subcellular location is the vacuole membrane. The protein resides in the cytoplasm. Essential protein required during embryogenesis. Believed to act as a core component of the putative HOPS endosomal tethering complex and of the class C core vacuole/endosome tethering (CORVET) complex. CORVET is required for vacuolar transport of SYP22. HOPS is required for the central vacuole formation. Involved in root development. Plays a role in vesicle-mediated protein trafficking to lysosomal compartments including the endocytic membrane transport pathways. This is Vacuolar sorting protein 18 from Arabidopsis thaliana (Mouse-ear cress).